The sequence spans 500 residues: Arabinofuranosidase/B-xylosidase (500 aa).

The first 21 residues, M1 to A21, serve as a signal peptide directing secretion. N467 carries an N-linked (GlcNAc...) asparagine glycan.

Belongs to the glycosyl hydrolase 54 family.

It carries out the reaction Hydrolysis of terminal non-reducing alpha-L-arabinofuranoside residues in alpha-L-arabinosides.. The enzyme catalyses Hydrolysis of (1-&gt;4)-beta-D-xylans, to remove successive D-xylose residues from the non-reducing termini.. This is Arabinofuranosidase/B-xylosidase (xyl1) from Trichoderma koningii (Hypocrea koningii).